We begin with the raw amino-acid sequence, 89 residues long: UPF0335 protein Nham_1221 (89 aa).

Belongs to the UPF0335 family.

The sequence is that of UPF0335 protein Nham_1221 from Nitrobacter hamburgensis (strain DSM 10229 / NCIMB 13809 / X14).